We begin with the raw amino-acid sequence, 495 residues long: Acetyl-coenzyme A carboxylase carboxyl transferase subunit beta, chloroplastic (495 aa).

A disordered region spans residues 187–208; it reads ESRNSSENEGSSRRTRTKGSDL. The CoA carboxyltransferase N-terminal domain occupies 226–495; it reads LWVQCENCYG…PLNQKSSKIK (270 aa). Positions 230, 233, 249, and 252 each coordinate Zn(2+). Residues 230 to 252 form a C4-type zinc finger; the sequence is CENCYGLNYKKFLKSKMNICEQC.

Belongs to the AccD/PCCB family. As to quaternary structure, acetyl-CoA carboxylase is a heterohexamer composed of biotin carboxyl carrier protein, biotin carboxylase and 2 subunits each of ACCase subunit alpha and ACCase plastid-coded subunit beta (accD). Zn(2+) is required as a cofactor. As to expression, RNA expressed in leaf, root and stem; the least expression occurs in stems.

It is found in the plastid. The protein resides in the chloroplast stroma. The enzyme catalyses N(6)-carboxybiotinyl-L-lysyl-[protein] + acetyl-CoA = N(6)-biotinyl-L-lysyl-[protein] + malonyl-CoA. It participates in lipid metabolism; malonyl-CoA biosynthesis; malonyl-CoA from acetyl-CoA: step 1/1. Its function is as follows. Component of the acetyl coenzyme A carboxylase (ACC) complex. Biotin carboxylase (BC) catalyzes the carboxylation of biotin on its carrier protein (BCCP) and then the CO(2) group is transferred by the transcarboxylase to acetyl-CoA to form malonyl-CoA. This is Acetyl-coenzyme A carboxylase carboxyl transferase subunit beta, chloroplastic from Nicotiana tabacum (Common tobacco).